Consider the following 405-residue polypeptide: Bestrophin homolog 14 (405 aa).

The next 4 helical transmembrane spans lie at 28–48, 63–83, 223–243, and 256–276; these read LIGF…LLDE, IGAQ…LIVA, LVYT…CLIG, and EITI…LGWL.

The protein belongs to the anion channel-forming bestrophin (TC 1.A.46) family. Calcium-sensitive chloride channel subfamily.

The protein localises to the membrane. In Caenorhabditis elegans, this protein is Bestrophin homolog 14 (best-14).